The sequence spans 440 residues: Xylose isomerase (440 aa).

Residues His-100 and Asp-103 contribute to the active site. The Mg(2+) site is built by Glu-231, Glu-267, His-270, Asp-295, Asp-306, Asp-308, and Asp-338.

The protein belongs to the xylose isomerase family. Homotetramer. Mg(2+) serves as cofactor.

The protein resides in the cytoplasm. The catalysed reaction is alpha-D-xylose = alpha-D-xylulofuranose. The polypeptide is Xylose isomerase (Burkholderia thailandensis (strain ATCC 700388 / DSM 13276 / CCUG 48851 / CIP 106301 / E264)).